We begin with the raw amino-acid sequence, 356 residues long: tRNA N6-adenosine threonylcarbamoyltransferase (356 aa).

The Fe cation site is built by H115 and H119. Residues 138–142 (LVSGG), D171, G184, and N283 contribute to the substrate site. D311 is a Fe cation binding site.

The protein belongs to the KAE1 / TsaD family. Fe(2+) serves as cofactor.

Its subcellular location is the cytoplasm. It carries out the reaction L-threonylcarbamoyladenylate + adenosine(37) in tRNA = N(6)-L-threonylcarbamoyladenosine(37) in tRNA + AMP + H(+). In terms of biological role, required for the formation of a threonylcarbamoyl group on adenosine at position 37 (t(6)A37) in tRNAs that read codons beginning with adenine. Is involved in the transfer of the threonylcarbamoyl moiety of threonylcarbamoyl-AMP (TC-AMP) to the N6 group of A37, together with TsaE and TsaB. TsaD likely plays a direct catalytic role in this reaction. The protein is tRNA N6-adenosine threonylcarbamoyltransferase of Prochlorococcus marinus (strain NATL2A).